Consider the following 23-residue polypeptide: Protein YqfH (23 aa).

This chain is Protein YqfH, found in Escherichia coli (strain K12).